The primary structure comprises 112 residues: UPF0342 protein SPP_1392 (112 aa).

This sequence belongs to the UPF0342 family.

In Streptococcus pneumoniae (strain P1031), this protein is UPF0342 protein SPP_1392.